The chain runs to 239 residues: Large ribosomal subunit protein uL3 (239 aa).

Gln-151 is modified (N5-methylglutamine).

It belongs to the universal ribosomal protein uL3 family. In terms of assembly, part of the 50S ribosomal subunit. Forms a cluster with proteins L14 and L19. Methylated by PrmB.

Functionally, one of the primary rRNA binding proteins, it binds directly near the 3'-end of the 23S rRNA, where it nucleates assembly of the 50S subunit. The protein is Large ribosomal subunit protein uL3 of Ruegeria sp. (strain TM1040) (Silicibacter sp.).